Reading from the N-terminus, the 326-residue chain is Peroxidase 39 (326 aa).

The N-terminal stretch at 1-23 (MTRFGLALLMILVIQGLVTFSEA) is a signal peptide. 4 disulfide bridges follow: Cys34/Cys114, Cys67/Cys72, Cys120/Cys322, and Cys199/Cys232. His65 acts as the Proton acceptor in catalysis. Residues Asp66, Val69, Gly71, Asp73, and Ser75 each contribute to the Ca(2+) site. Asn79 carries an N-linked (GlcNAc...) asparagine glycan. Pro162 contacts substrate. N-linked (GlcNAc...) asparagine glycosylation occurs at Asn167. His192 contacts heme b. A Ca(2+)-binding site is contributed by Thr193. Residues Asn208 and Asn238 are each glycosylated (N-linked (GlcNAc...) asparagine). Ca(2+) contacts are provided by Asp245, Ser248, and Asp253.

Belongs to the peroxidase family. Classical plant (class III) peroxidase subfamily. Heme b is required as a cofactor. The cofactor is Ca(2+). As to expression, slightly expressed in roots.

It localises to the secreted. It catalyses the reaction 2 a phenolic donor + H2O2 = 2 a phenolic radical donor + 2 H2O. In terms of biological role, removal of H(2)O(2), oxidation of toxic reductants, biosynthesis and degradation of lignin, suberization, auxin catabolism, response to environmental stresses such as wounding, pathogen attack and oxidative stress. These functions might be dependent on each isozyme/isoform in each plant tissue. The polypeptide is Peroxidase 39 (PER39) (Arabidopsis thaliana (Mouse-ear cress)).